Here is a 443-residue protein sequence, read N- to C-terminus: Ribitol-5-phosphate xylosyltransferase 1 (443 aa).

The Cytoplasmic segment spans residues 1 to 9 (MRLTRKRLC). The helical; Signal-anchor for type II membrane protein transmembrane segment at 10–30 (SFLIALYCLFSLYAAYHVFFG) threads the bilayer. Topologically, residues 31 to 443 (RRRQAPAGSP…ESSFLMNNKS (413 aa)) are extracellular. Residues 35–76 (APAGSPRGLRKGAAPARERRGREQSTLESEEWNPWEGDEKNE) form a disordered region. The segment covering 50–59 (ARERRGREQS) has biased composition (basic and acidic residues).

Belongs to the RXYLT1 family. In terms of assembly, forms a complex composed of FKTN/fukutin, FKRP and RXYLT1/TMEM5.

The protein localises to the golgi apparatus membrane. The catalysed reaction is 3-O-[Rib-ol-P-Rib-ol-P-3-beta-D-GalNAc-(1-&gt;3)-beta-D-GlcNAc-(1-&gt;4)-(O-6-P-alpha-D-Man)]-Thr-[protein] + UDP-alpha-D-xylose = 3-O-[beta-D-Xyl-(1-&gt;4)-Rib-ol-P-Rib-ol-P-3-beta-D-GalNAc-(1-&gt;3)-beta-D-GlcNAc-(1-&gt;4)-(O-6-P-alpha-D-Man)]-Thr-[protein] + UDP + H(+). Its pathway is protein modification; protein glycosylation. Acts as a UDP-D-xylose:ribitol-5-phosphate beta1,4-xylosyltransferase, which catalyzes the transfer of UDP-D-xylose to ribitol 5-phosphate (Rbo5P) to form the Xylbeta1-4Rbo5P linkage on O-mannosyl glycan. Participates in the biosynthesis of the phosphorylated O-mannosyl trisaccharide (N-acetylgalactosamine-beta-3-N-acetylglucosamine-beta-4-(phosphate-6-)mannose), a carbohydrate structure present in alpha-dystroglycan (DAG1), which is required for binding laminin G-like domain-containing extracellular proteins with high affinity. The chain is Ribitol-5-phosphate xylosyltransferase 1 from Homo sapiens (Human).